A 446-amino-acid chain; its full sequence is Light-independent protochlorophyllide reductase subunit N (446 aa).

[4Fe-4S] cluster-binding residues include Cys-22, Cys-47, and Cys-107.

This sequence belongs to the BchN/ChlN family. As to quaternary structure, protochlorophyllide reductase is composed of three subunits; ChlL, ChlN and ChlB. Forms a heterotetramer of two ChlB and two ChlN subunits. Requires [4Fe-4S] cluster as cofactor.

The protein localises to the plastid. It is found in the chloroplast. It catalyses the reaction chlorophyllide a + oxidized 2[4Fe-4S]-[ferredoxin] + 2 ADP + 2 phosphate = protochlorophyllide a + reduced 2[4Fe-4S]-[ferredoxin] + 2 ATP + 2 H2O. It functions in the pathway porphyrin-containing compound metabolism; chlorophyll biosynthesis (light-independent). Functionally, component of the dark-operative protochlorophyllide reductase (DPOR) that uses Mg-ATP and reduced ferredoxin to reduce ring D of protochlorophyllide (Pchlide) to form chlorophyllide a (Chlide). This reaction is light-independent. The NB-protein (ChlN-ChlB) is the catalytic component of the complex. This is Light-independent protochlorophyllide reductase subunit N from Mesostigma viride (Green alga).